The primary structure comprises 640 residues: Sodium-dependent nutrient amino acid transporter 1 (640 aa).

Low complexity predominate over residues 1–13 (MELKPNGNHNNNN). Positions 1-25 (MELKPNGNHNNNNAAEKSEDTEKAK) are disordered. Topologically, residues 1 to 30 (MELKPNGNHNNNNAAEKSEDTEKAKAERTN) are cytoplasmic. Over residues 16 to 25 (EKSEDTEKAK) the composition is skewed to basic and acidic residues. Helical transmembrane passes span 31 to 51 (WGNG…LGNV), 64 to 84 (GAFL…MYYL), and 117 to 137 (TICI…YLFV). N-linked (GlcNAc...) asparagine glycans are attached at residues Asn-174, Asn-181, and Asn-197. 9 helical membrane passes run 228-248 (PDWK…LVIM), 257-277 (AAYF…IRAV), 306-326 (AVVQ…MFAS), 340-360 (IVTT…FAIL), 400-420 (LFSV…IVAL), 447-467 (CGFL…LTLV), 473-493 (TYVV…IYGL), 515-535 (CWSF…MVTI), and 551-571 (VAGW…GLWY).

This sequence belongs to the sodium:neurotransmitter symporter (SNF) (TC 2.A.22) family.

It localises to the membrane. Its function is as follows. Unusual broad substrate spectrum amino acid:sodium cotransporter that promotes absorption of the D isomers of essential amino acids. Neutral amino acids are the preferred substrates, especially methionine and phenylalanine. This chain is Sodium-dependent nutrient amino acid transporter 1, found in Drosophila ananassae (Fruit fly).